The primary structure comprises 445 residues: MSIQIKQSTMVRPAEETPNKSLWLSNIDMILRTPYSHTGAVLIYKQPDNNEDNIHPSSSMYFDANILIEALSKALVPFYPMAGRLKINGDRYEIDCNAEGALFVEAESSHVLEDFGDFRPNDELHRVMVPTCDYSKGISSFPLLMVQLTRFRCGGVSIGFAQHHHVCDGMAHFEFNNSWARIAKGLLPALEPVHDRYLHLRPRNPPQIKYSHSQFEPFVPSLPNELLDGKTNKSQTLFILSREQINTLKQKLDLSNNTTRLSTYEVVAAHVWRSVSKARGLSDHEEIKLIMPVDGRSRINNPSLPKGYCGNVVFLAVCTATVGDLSCNPLTDTAGKVQEALKGLDDDYLRSAIDHTESKPGLPVPYMGSPEKTLYPNVLVNSWGRIPYQAMDFGWGSPTFFGISNIFYDGQCFLIPSRDGDGSMTLAINLFSSHLSRFKKYFYDF.

Catalysis depends on proton acceptor residues histidine 164 and aspartate 392.

It belongs to the plant acyltransferase family. N-terminus is blocked.

It carries out the reaction anthranilate + benzoyl-CoA = N-benzoylanthranilate + CoA. Its pathway is phytoalexin biosynthesis; methoxydianthramide B biosynthesis. Functionally, catalyzes the formation of N-benzoylanthranilate, in the course of methoxydianthramide B, a phytoalexin. Phytoalexins are produced in response to infection by parasites, and are essential for the expression of disease resistance. The sequence is that of Anthranilate N-benzoyltransferase protein 1 (HCBT1) from Dianthus caryophyllus (Carnation).